Consider the following 722-residue polypeptide: Phenylalanine ammonia-lyase lenB (722 aa).

Catalysis depends on Tyr-83, which acts as the Proton donor/acceptor. The segment at 117-136 (LPTDRSSSRPSSRYPHGLRS) is disordered. A cross-link (5-imidazolinone (Ala-Gly)) is located at residues 190-192 (ASG). 2,3-didehydroalanine (Ser) is present on Ser-191. Residues Asn-247, Gln-334, Arg-340, Asn-370, Lys-441, Glu-469, and Asn-472 each coordinate (E)-cinnamate.

This sequence belongs to the PAL/histidase family. Contains an active site 4-methylidene-imidazol-5-one (MIO), which is formed autocatalytically by cyclization and dehydration of residues Ala-Ser-Gly.

The catalysed reaction is L-phenylalanine = (E)-cinnamate + NH4(+). Its pathway is alkaloid biosynthesis. In terms of biological role, phenylalanine ammonia-lyase; part of the gene cluster that mediates the biosynthesis of the ergot alkaloids lentopeptins A and B. Within the pathway, lenB provides the cinnamic acid starter unit for the synthesis of the N-acyldiketopiperazine intermediate by the NRPS lenA. Cinnamic acid is condensed with the Ala-Val-Ala peptide chain by lenA which leads to the N-acyldiketopiperazine intermediate which in turn is converted into lentopeptins A and B by the cytochrome P450 monooxygenase lenC. In Aspergillus lentulus, this protein is Phenylalanine ammonia-lyase lenB.